The following is a 253-amino-acid chain: RNA polymerase sigma-F factor (253 aa).

Residues 61–74 (DLFQIGCIGLLKSV) carry the Polymerase core binding motif. The H-T-H motif DNA-binding region spans 221-240 (QSEVAARLGISQVQVSRLEK).

Belongs to the sigma-70 factor family.

In terms of biological role, sigma factors are initiation factors that promote the attachment of RNA polymerase to specific initiation sites and are then released. This sigma factor is responsible for the expression of sporulation specific genes. It is responsible for directing gene expression in the forespore compartment of developing cells of Bacillus. This is RNA polymerase sigma-F factor (sigF) from Priestia megaterium (Bacillus megaterium).